The chain runs to 370 residues: Histidinol-phosphate aminotransferase (370 aa).

K222 bears the N6-(pyridoxal phosphate)lysine mark.

This sequence belongs to the class-II pyridoxal-phosphate-dependent aminotransferase family. Histidinol-phosphate aminotransferase subfamily. In terms of assembly, homodimer. Pyridoxal 5'-phosphate is required as a cofactor.

It catalyses the reaction L-histidinol phosphate + 2-oxoglutarate = 3-(imidazol-4-yl)-2-oxopropyl phosphate + L-glutamate. It functions in the pathway amino-acid biosynthesis; L-histidine biosynthesis; L-histidine from 5-phospho-alpha-D-ribose 1-diphosphate: step 7/9. This is Histidinol-phosphate aminotransferase from Bacillus cytotoxicus (strain DSM 22905 / CIP 110041 / 391-98 / NVH 391-98).